Consider the following 445-residue polypeptide: 3-dehydroquinate synthase, chloroplastic (445 aa).

The transit peptide at 1–68 (MAAFSLSAKQ…RASASSTAPV (68 aa)) directs the protein to the chloroplast. NAD(+)-binding positions include Asn-122, 153–155 (DGE), Lys-158, 186–191 (GGVIGD), 211–212 (TT), Lys-224, Lys-233, and 251–254 (TLNT). Residue Glu-266 coordinates a divalent metal cation. Position 308 (Lys-308) interacts with NAD(+). A divalent metal cation-binding residues include His-329 and His-346.

Belongs to the sugar phosphate cyclases superfamily. Dehydroquinate synthase family. In terms of assembly, homodimer. A divalent metal cation is required as a cofactor. Requires NAD(+) as cofactor.

The protein resides in the plastid. It localises to the chloroplast. The catalysed reaction is 7-phospho-2-dehydro-3-deoxy-D-arabino-heptonate = 3-dehydroquinate + phosphate. It participates in metabolic intermediate biosynthesis; chorismate biosynthesis; chorismate from D-erythrose 4-phosphate and phosphoenolpyruvate: step 2/7. Catalyzes the second step in the shikimate pathway. The sequence is that of 3-dehydroquinate synthase, chloroplastic (DHQS) from Actinidia chinensis var. chinensis (Chinese soft-hair kiwi).